Here is a 227-residue protein sequence, read N- to C-terminus: Probable GTP-binding protein EngB (227 aa).

One can recognise an EngB-type G domain in the interval 13 to 188 (IGLEVAFAGR…AGVMGNWYEY (176 aa)). GTP is bound by residues 21–28 (GRSNAGKS), 48–52 (GRTQM), 67–70 (DLPG), 134–137 (TKAD), and 167–169 (FSA). Mg(2+) is bound by residues Ser-28 and Thr-50.

Belongs to the TRAFAC class TrmE-Era-EngA-EngB-Septin-like GTPase superfamily. EngB GTPase family. The cofactor is Mg(2+).

Necessary for normal cell division and for the maintenance of normal septation. This Psychrobacter cryohalolentis (strain ATCC BAA-1226 / DSM 17306 / VKM B-2378 / K5) protein is Probable GTP-binding protein EngB.